The following is a 671-amino-acid chain: Anaphase-promoting complex subunit cut9 (671 aa).

Positions 1–24 are disordered; sequence MVVKRTQTDSRMQSTPGNHNHPDA. TPR repeat units lie at residues 83 to 114, 117 to 142, 150 to 173, 198 to 229, 234 to 257, 268 to 296, 306 to 334, 341 to 368, 373 to 402, 407 to 435, 442 to 470, 475 to 507, 513 to 545, and 550 to 579; these read REDYLRLWRHDALMQQQYKCAAFVGEKVLDIT, PNDAFWLAQVYCCTGDYARAKCLLTK, SACRYLAAFCLVKLYDWQGALNLL, LEASMCYLRGQVYTNLSNFDRAKECYKEALMV, YEAFDQLVSNHLLTADEEWDLVLK, AAFLRSLYMLKLNKTSHEDELRRAEDYLS, DLLLCKADTLFVRSRFIDVLAITTKILEI, VYPLHLASLHESGEKNKLYLISNDLVDR, AVTWLAVGIYYLCVNKISEARRYFSKSSTM, GPAWIGFAHSFAIEGEHDQAISAYTTAAR, LPYLFLGMQHMQLGNILLANEYLQSSYAL, PLLLNELGVVAFNKSDMQTAINHFQNALLLVKK, KPWAATWANLGHAYRKLKMYDAAIDALNQGLLL, and ANVHTAIALVYLHKKIPGLAITHLHESLAI. The tract at residues 622–643 is disordered; it reads NLNTSDKSMSMEDQSGKVTESV.

In terms of assembly, the APC/C is composed of at least 13 subunits: apc1, apc2, nuc2, apc4, apc5, cut9, apc8, apc10, apc11, hcn1, apc13, apc14 and apc15. Homodimer. Interacts directly with nuc2 and hcn1. In terms of processing, phosphorylated.

The protein localises to the nucleus. Its function is as follows. Component of the anaphase-promoting complex/cyclosome (APC/C), a cell cycle-regulated E3 ubiquitin-protein ligase complex that controls progression through mitosis and the G1 phase of the cell cycle. The APC/C is thought to confer substrate specificity and, in the presence of ubiquitin-conjugating E2 enzymes, it catalyzes the formation of protein-ubiquitin conjugates that are subsequently degraded by the 26S proteasome. May play a pivotal role in the control of anaphase. The protein is Anaphase-promoting complex subunit cut9 (cut9) of Schizosaccharomyces pombe (strain 972 / ATCC 24843) (Fission yeast).